The sequence spans 717 residues: Protein Teyrha-meyrha (717 aa).

Polar residues predominate over residues 140–152 (FRTDSASPTCTSH). Disordered stretches follow at residues 140–214 (FRTD…SNPA), 229–270 (HLAA…APPV), 440–498 (KIPP…QPGK), 511–539 (SQKD…GEAP), 563–594 (DSCG…MDTA), and 624–717 (QRRQ…DTKA). The segment covering 195–214 (ATSSSASSSSSSSCSTSNPA) has biased composition (low complexity). Over residues 235 to 263 (PHHHPHTHAHSHPHPLAHPHAHSHHHVGH) the composition is skewed to basic residues. A compositionally biased stretch (basic and acidic residues) spans 442–451 (PPEDDAKSQE). Acidic residues predominate over residues 452–466 (EIETVDVESCNDEVP). The span at 471–482 (ELATPSSGSSGT) shows a compositional bias: polar residues. Over residues 513–522 (KDPHPDEHDV) the composition is skewed to basic and acidic residues. Low complexity-rich tracts occupy residues 523–533 (STNVTTASSSS) and 570–580 (NDTNSSSSTHN). Polar residues predominate over residues 630–640 (QNVGSSRSLEN). Low complexity predominate over residues 667–686 (NNNNNNNNNNNNSNSNNNNN). The span at 687-704 (PSTKYAESMENSLSQLSS) shows a compositional bias: polar residues.

As to expression, in embryos, expressed specifically in M12 (at protein level).

It localises to the nucleus. In terms of biological role, required for the correct synaptic targeting of motoneurons RP5 and V to muscle 12 (M12). May be involved in the negative regulation of Tl in M12. Involved in the correct patterning of veins in the proximal (costal) region of the wing blade. This Drosophila melanogaster (Fruit fly) protein is Protein Teyrha-meyrha.